A 427-amino-acid polypeptide reads, in one-letter code: GTPase Obg (427 aa).

One can recognise an Obg domain in the interval 1–158 (MFVDIAKIYV…LWVILELKVL (158 aa)). Residues 159–330 (ADVGLIGYPN…VLKRAYELLK (172 aa)) form the OBG-type G domain. Residues 165–172 (GYPNVGKS), 190–194 (FTTKY), 212–215 (DIPG), 282–285 (NKMD), and 311–313 (SAA) each bind GTP. Residues serine 172 and threonine 192 each coordinate Mg(2+). Residues 347–427 (FVYYKKKDVK…ILDVEFEYYE (81 aa)) enclose the OCT domain.

This sequence belongs to the TRAFAC class OBG-HflX-like GTPase superfamily. OBG GTPase family. As to quaternary structure, monomer. Mg(2+) serves as cofactor.

Its subcellular location is the cytoplasm. Its function is as follows. An essential GTPase which binds GTP, GDP and possibly (p)ppGpp with moderate affinity, with high nucleotide exchange rates and a fairly low GTP hydrolysis rate. Plays a role in control of the cell cycle, stress response, ribosome biogenesis and in those bacteria that undergo differentiation, in morphogenesis control. The protein is GTPase Obg of Caldicellulosiruptor bescii (strain ATCC BAA-1888 / DSM 6725 / KCTC 15123 / Z-1320) (Anaerocellum thermophilum).